Consider the following 426-residue polypeptide: Glutamate-1-semialdehyde 2,1-aminomutase (426 aa).

Lysine 268 is subject to N6-(pyridoxal phosphate)lysine.

It belongs to the class-III pyridoxal-phosphate-dependent aminotransferase family. HemL subfamily. Pyridoxal 5'-phosphate is required as a cofactor.

Its subcellular location is the cytoplasm. The catalysed reaction is (S)-4-amino-5-oxopentanoate = 5-aminolevulinate. Its pathway is porphyrin-containing compound metabolism; protoporphyrin-IX biosynthesis; 5-aminolevulinate from L-glutamyl-tRNA(Glu): step 2/2. In Saccharolobus islandicus (strain M.16.27) (Sulfolobus islandicus), this protein is Glutamate-1-semialdehyde 2,1-aminomutase.